The chain runs to 433 residues: ATP-dependent protease ATPase subunit HslU (433 aa).

ATP contacts are provided by residues Ile18, 60 to 65 (GVGKTE), Asp246, Glu311, and Arg383.

The protein belongs to the ClpX chaperone family. HslU subfamily. A double ring-shaped homohexamer of HslV is capped on each side by a ring-shaped HslU homohexamer. The assembly of the HslU/HslV complex is dependent on binding of ATP.

Its subcellular location is the cytoplasm. Its function is as follows. ATPase subunit of a proteasome-like degradation complex; this subunit has chaperone activity. The binding of ATP and its subsequent hydrolysis by HslU are essential for unfolding of protein substrates subsequently hydrolyzed by HslV. HslU recognizes the N-terminal part of its protein substrates and unfolds these before they are guided to HslV for hydrolysis. The polypeptide is ATP-dependent protease ATPase subunit HslU (Cereibacter sphaeroides (strain ATCC 17029 / ATH 2.4.9) (Rhodobacter sphaeroides)).